The primary structure comprises 259 residues: UPF0246 protein MADE_1015435 (259 aa).

This sequence belongs to the UPF0246 family.

The polypeptide is UPF0246 protein MADE_1015435 (Alteromonas mediterranea (strain DSM 17117 / CIP 110805 / LMG 28347 / Deep ecotype)).